Here is a 210-residue protein sequence, read N- to C-terminus: Thymidylate kinase (210 aa).

ATP is bound at residue 9 to 16 (GLEGAGKS).

The protein belongs to the thymidylate kinase family.

It carries out the reaction dTMP + ATP = dTDP + ADP. In terms of biological role, phosphorylation of dTMP to form dTDP in both de novo and salvage pathways of dTTP synthesis. In Aliivibrio fischeri (strain MJ11) (Vibrio fischeri), this protein is Thymidylate kinase.